A 257-amino-acid chain; its full sequence is GTP cyclohydrolase III (257 aa).

It belongs to the archaeal-type GTP cyclohydrolase family.

The enzyme catalyses GTP + 3 H2O = 2-amino-5-formylamino-6-(5-phospho-D-ribosylamino)pyrimidin-4(3H)-one + 2 phosphate + 2 H(+). Its function is as follows. Catalyzes the formation of 2-amino-5-formylamino-6-ribofuranosylamino-4(3H)-pyrimidinone ribonucleotide monophosphate and inorganic phosphate from GTP. Also has an independent pyrophosphate phosphohydrolase activity. The protein is GTP cyclohydrolase III of Halorubrum lacusprofundi (strain ATCC 49239 / DSM 5036 / JCM 8891 / ACAM 34).